The chain runs to 1149 residues: DNA-directed RNA polymerase III subunit RPC2 (1149 aa).

Zn(2+)-binding residues include Cys-1095, Cys-1098, Cys-1107, and Cys-1110. The segment at 1095–1110 (CDKCGLMGYSGWCTTC) adopts a C4-type zinc-finger fold.

Belongs to the RNA polymerase beta chain family. Component of the RNA polymerase III (Pol III) complex consisting of 17 subunits.

The protein localises to the nucleus. It catalyses the reaction RNA(n) + a ribonucleoside 5'-triphosphate = RNA(n+1) + diphosphate. Functionally, DNA-dependent RNA polymerase catalyzes the transcription of DNA into RNA using the four ribonucleoside triphosphates as substrates. Second largest core component of RNA polymerase III which synthesizes small RNAs, such as 5S rRNA and tRNAs. Proposed to contribute to the polymerase catalytic activity and forms the polymerase active center together with the largest subunit. Pol III is composed of mobile elements and RPC2 is part of the core element with the central large cleft and probably a clamp element that moves to open and close the cleft. The polypeptide is DNA-directed RNA polymerase III subunit RPC2 (RET1) (Saccharomyces cerevisiae (strain ATCC 204508 / S288c) (Baker's yeast)).